A 235-amino-acid polypeptide reads, in one-letter code: Elongation factor Tu (235 aa).

Positions 1–125 (KNMITGAAQM…QVDEYIPAPE (125 aa)) constitute a tr-type G domain. 47–50 (NKQD) serves as a coordination point for GTP.

It belongs to the TRAFAC class translation factor GTPase superfamily. Classic translation factor GTPase family. EF-Tu/EF-1A subfamily. Monomer.

The protein localises to the cytoplasm. The enzyme catalyses GTP + H2O = GDP + phosphate + H(+). GTP hydrolase that promotes the GTP-dependent binding of aminoacyl-tRNA to the A-site of ribosomes during protein biosynthesis. The protein is Elongation factor Tu (tufA) of Leptolyngbya ectocarpi (Phormidium ectocarpi).